The sequence spans 393 residues: Uroporphyrinogen decarboxylase, chloroplastic (393 aa).

Residues 1 to 64 (MATACPPLSL…AGERNQREEV (64 aa)) are disordered. Residues 23 to 37 (AGPNAGSSRPSAAAP) are compositionally biased toward low complexity. Over residues 38–50 (SERRSWRRPRPDG) the composition is skewed to basic and acidic residues. Substrate is bound by residues 73–77 (RQAGR), F92, S122, D123, Y200, S255, and H370.

The protein belongs to the uroporphyrinogen decarboxylase family. As to quaternary structure, homodimer.

Its subcellular location is the plastid. The protein localises to the chloroplast. It catalyses the reaction uroporphyrinogen III + 4 H(+) = coproporphyrinogen III + 4 CO2. Its pathway is porphyrin-containing compound metabolism; protoporphyrin-IX biosynthesis; coproporphyrinogen-III from 5-aminolevulinate: step 4/4. In terms of biological role, catalyzes the decarboxylation of four acetate groups of uroporphyrinogen-III to yield coproporphyrinogen-III. The polypeptide is Uroporphyrinogen decarboxylase, chloroplastic (LES22) (Zea mays (Maize)).